A 540-amino-acid chain; its full sequence is Bifunctional pantoate ligase/cytidylate kinase (540 aa).

The pantoate--beta-alanine ligase stretch occupies residues 1 to 280 (MQWLRTVAAL…VGQTRLIDNL (280 aa)). 28–35 (MGSLHEGH) is a binding site for ATP. H35 functions as the Proton donor in the catalytic mechanism. Residue Q59 participates in (R)-pantoate binding. Position 59 (Q59) interacts with beta-alanine. 150-153 (GQKD) lines the ATP pocket. Position 156 (Q156) interacts with (R)-pantoate. ATP is bound by residues V179 and 187-190 (YSSR). Residues 281–540 (LLSPEGVDPL…RSGAAHFDII (260 aa)) form a cytidylate kinase region. The disordered stretch occupies residues 288–307 (DPLPQEQQSAVPPSPKRGRR).

In the N-terminal section; belongs to the pantothenate synthetase family. It in the C-terminal section; belongs to the cytidylate kinase family. Type 1 subfamily.

Its subcellular location is the cytoplasm. The catalysed reaction is (R)-pantoate + beta-alanine + ATP = (R)-pantothenate + AMP + diphosphate + H(+). The enzyme catalyses CMP + ATP = CDP + ADP. It catalyses the reaction dCMP + ATP = dCDP + ADP. It functions in the pathway cofactor biosynthesis; (R)-pantothenate biosynthesis; (R)-pantothenate from (R)-pantoate and beta-alanine: step 1/1. Functionally, catalyzes the condensation of pantoate with beta-alanine in an ATP-dependent reaction via a pantoyl-adenylate intermediate. In terms of biological role, catalyzes the transfer of a phosphate group from ATP to either CMP or dCMP to form CDP or dCDP and ADP, respectively. The chain is Bifunctional pantoate ligase/cytidylate kinase from Synechococcus sp. (strain JA-3-3Ab) (Cyanobacteria bacterium Yellowstone A-Prime).